A 220-amino-acid chain; its full sequence is UPF0319 protein YccT (220 aa).

A signal peptide spans 1-20; it reads MKTGALATFLALCLPATVFA.

The protein belongs to the UPF0319 family.

This chain is UPF0319 protein YccT, found in Salmonella heidelberg (strain SL476).